The following is a 272-amino-acid chain: CDAN1-interacting nuclease 1 (272 aa).

The protein localises to the nucleus. Its subcellular location is the cytoplasm. May play a role in erythroid cell differentiation. The sequence is that of CDAN1-interacting nuclease 1 (CDIN1) from Gallus gallus (Chicken).